We begin with the raw amino-acid sequence, 498 residues long: MVPVVALVGRPNVGKSTLFNRLTRTRDALVADFPGLTRDRKYGQARLDEEHEFIVIDTGGIDGTEEGVETKMAEQSLAAIDEADVVLFLVDGRAGLTPADEAIAAHLRKIEKPAMLVVNKIDGIDADAACADFWQLGVDDMYQIAAAHGRGVTALLERALAPFFDDLLTSESEEGEIEDLTEFEDAEIAPDEYTEEEAEAEFQRLQEQPIKLAIIGRPNVGKSTLTNRILGEERVVVYDMPGTTRDSIYIPMERDGREYVIIDTAGVRRRGRINETVEKFSVVKTLKAVEDANVVLLVIDARENISDQDLSLLGFALNAGRSIVLAVNKWDGLDNEVKENVKKELDRRLGFVDFARIHFISALHGTGVGHLFESIQEAYKSATTRVGTSVLTRIMKMATDDHQPPMVRGRRIKLKYAHAGGYNPPIVVIHGNMVRELPDSYKRYLMNYFRKSLEIMGTPIRINFQNSENPFENRANKLTLSQERKRKRMMSVVKNRKK.

2 consecutive EngA-type G domains span residues 3 to 167 (PVVA…FDDL) and 210 to 383 (IKLA…KSAT). Residues 9–16 (GRPNVGKS), 57–61 (DTGGI), 119–122 (NKID), 216–223 (GRPNVGKS), 263–267 (DTAGV), and 328–331 (NKWD) each bind GTP. A KH-like domain is found at 384-468 (TRVGTSVLTR…PIRINFQNSE (85 aa)).

Belongs to the TRAFAC class TrmE-Era-EngA-EngB-Septin-like GTPase superfamily. EngA (Der) GTPase family. In terms of assembly, associates with the 50S ribosomal subunit.

Functionally, GTPase that plays an essential role in the late steps of ribosome biogenesis. The sequence is that of GTPase Der from Vibrio parahaemolyticus serotype O3:K6 (strain RIMD 2210633).